The primary structure comprises 312 residues: Porphobilinogen deaminase (312 aa).

C241 is subject to S-(dipyrrolylmethanemethyl)cysteine.

Belongs to the HMBS family. In terms of assembly, monomer. The cofactor is dipyrromethane.

The enzyme catalyses 4 porphobilinogen + H2O = hydroxymethylbilane + 4 NH4(+). It participates in porphyrin-containing compound metabolism; protoporphyrin-IX biosynthesis; coproporphyrinogen-III from 5-aminolevulinate: step 2/4. The protein operates within porphyrin-containing compound metabolism; chlorophyll biosynthesis. In terms of biological role, tetrapolymerization of the monopyrrole PBG into the hydroxymethylbilane pre-uroporphyrinogen in several discrete steps. This Chlorobaculum parvum (strain DSM 263 / NCIMB 8327) (Chlorobium vibrioforme subsp. thiosulfatophilum) protein is Porphobilinogen deaminase (hemC).